A 1171-amino-acid chain; its full sequence is DNA-directed RNA polymerase subunit beta (1171 aa).

It belongs to the RNA polymerase beta chain family. In terms of assembly, the RNAP catalytic core consists of 2 alpha, 1 beta, 1 beta' and 1 omega subunit. When a sigma factor is associated with the core the holoenzyme is formed, which can initiate transcription.

It catalyses the reaction RNA(n) + a ribonucleoside 5'-triphosphate = RNA(n+1) + diphosphate. Functionally, DNA-dependent RNA polymerase catalyzes the transcription of DNA into RNA using the four ribonucleoside triphosphates as substrates. The chain is DNA-directed RNA polymerase subunit beta from Kineococcus radiotolerans (strain ATCC BAA-149 / DSM 14245 / SRS30216).